The primary structure comprises 192 residues: Ciliary microtubule inner protein 3 (192 aa).

The tract at residues 24 to 108 (RAGAEGGPSL…SGQKVKAPHR (85 aa)) is disordered. Basic residues predominate over residues 55–64 (APRRPPRPRT).

Belongs to the CIMIP3-like family. Detected in the sperm flagellum (at protein level).

It localises to the cytoplasm. Its subcellular location is the cytoskeleton. The protein localises to the flagellum axoneme. The polypeptide is Ciliary microtubule inner protein 3 (Bos taurus (Bovine)).